A 225-amino-acid chain; its full sequence is ATP-dependent dethiobiotin synthetase BioD 1 (225 aa).

2 residues coordinate Mg(2+): Glu13 and Thr17. Position 13–18 (13–18 (EVGKTV)) interacts with ATP. Lys38 is an active-site residue. Position 42 (Ser42) interacts with substrate. The Mg(2+) site is built by Asp55 and Glu116. ATP is bound by residues Asp55, 116–119 (EGAG), and 176–177 (ND). Tyr188 is a substrate binding site. ATP contacts are provided by residues 205–207 (PWL) and Glu212.

It belongs to the dethiobiotin synthetase family. As to quaternary structure, homodimer. It depends on Mg(2+) as a cofactor.

The protein localises to the cytoplasm. The catalysed reaction is (7R,8S)-7,8-diammoniononanoate + CO2 + ATP = (4R,5S)-dethiobiotin + ADP + phosphate + 3 H(+). It functions in the pathway cofactor biosynthesis; biotin biosynthesis; biotin from 7,8-diaminononanoate: step 1/2. In terms of biological role, catalyzes a mechanistically unusual reaction, the ATP-dependent insertion of CO2 between the N7 and N8 nitrogen atoms of 7,8-diaminopelargonic acid (DAPA, also called 7,8-diammoniononanoate) to form a ureido ring. Only CTP can partially replace ATP while diaminobiotin is only 37% as effective as 7,8-diaminopelargonic acid. In another study both CTP and GTP (but not ITP, TTP or UTP) can partially replace ATP. In Escherichia coli (strain K12), this protein is ATP-dependent dethiobiotin synthetase BioD 1.